The primary structure comprises 242 residues: Orotidine 5'-phosphate decarboxylase (242 aa).

Residues D16, K37, 64 to 73, T128, R190, Q199, G219, and R220 contribute to the substrate site; that span reads DLKFHDIPNT. Catalysis depends on K66, which acts as the Proton donor.

This sequence belongs to the OMP decarboxylase family. Type 1 subfamily. In terms of assembly, homodimer.

It carries out the reaction orotidine 5'-phosphate + H(+) = UMP + CO2. It participates in pyrimidine metabolism; UMP biosynthesis via de novo pathway; UMP from orotate: step 2/2. Its function is as follows. Catalyzes the decarboxylation of orotidine 5'-monophosphate (OMP) to uridine 5'-monophosphate (UMP). This chain is Orotidine 5'-phosphate decarboxylase, found in Prochlorococcus marinus (strain MIT 9312).